The chain runs to 131 residues: Profilin-2 (131 aa).

The protein belongs to the profilin family. As to quaternary structure, occurs in many kinds of cells as a complex with monomeric actin in a 1:1 ratio. In terms of tissue distribution, expressed in vascular bundles of roots, hypocotyls, cotyledons, leaves, sepals, petals, stamen filaments and stalks of developing seeds. Expressed in leaf epidermal cells, trichomes and stem epidermal cells. Detected in phloem exudates (at protein level).

Its subcellular location is the cytoplasm. The protein resides in the cytoskeleton. The protein localises to the endoplasmic reticulum. It localises to the cytosol. It is found in the nucleus. In terms of biological role, binds to actin monomers and regulates the organization of the actin cytoskeleton. At high concentrations, profilin prevents the polymerization of actin, whereas it enhances it at low concentrations. At low concentrations, associates with the poly-proline motif of formins to enhance actin filament elongation rate. Binds G-actin and poly-L-proline with low affinity in vitro. Binds ACT1, ACT7 and ACT11 and inhibits actin polymerization. May be involved in the cross-talk between vesicular trafficking and the actin cytoskeleton. Inhibits cell growth of various pathogenic fungal strains. May play a role as antifungal proteins in the defense system against fungal pathogen attacks. The chain is Profilin-2 from Arabidopsis thaliana (Mouse-ear cress).